The primary structure comprises 127 residues: EF-hand calcium-binding domain-containing protein 10 (127 aa).

Residues Met-63–Cys-98 form the EF-hand domain.

This Homo sapiens (Human) protein is EF-hand calcium-binding domain-containing protein 10 (EFCAB10).